The chain runs to 126 residues: Holo-[acyl-carrier-protein] synthase (126 aa).

Asp9 and Glu59 together coordinate Mg(2+).

Belongs to the P-Pant transferase superfamily. AcpS family. Mg(2+) is required as a cofactor.

Its subcellular location is the cytoplasm. The catalysed reaction is apo-[ACP] + CoA = holo-[ACP] + adenosine 3',5'-bisphosphate + H(+). In terms of biological role, transfers the 4'-phosphopantetheine moiety from coenzyme A to a Ser of acyl-carrier-protein. In Myxococcus xanthus (strain DK1622), this protein is Holo-[acyl-carrier-protein] synthase.